The following is a 199-amino-acid chain: Peroxiredoxin-1 (199 aa).

The Thioredoxin domain occupies 6-165 (AYIGKLAPDF…TLRLVQAFQF (160 aa)). The active-site Cysteine sulfenic acid (-SOH) intermediate is the C52.

Belongs to the peroxiredoxin family. AhpC/Prx1 subfamily. In terms of assembly, homodimer; disulfide-linked, upon oxidation. 5 homodimers assemble to form a ring-like decamer. Interacts with GDPD5; forms a mixed-disulfide with GDPD5. Interacts with SESN1 and SESN2. Interacts with FAM107A. The enzyme can be inactivated by further oxidation of the cysteine sulfenic acid (C(P)-SOH) to sulphinic acid (C(P)-SO2H) instead of its condensation to a disulfide bond. It can be reactivated by forming a transient disulfide bond with sulfiredoxin SRXN1, which reduces the cysteine sulfinic acid in an ATP- and Mg-dependent manner.

The protein localises to the cytoplasm. The catalysed reaction is a hydroperoxide + [thioredoxin]-dithiol = an alcohol + [thioredoxin]-disulfide + H2O. Its function is as follows. Thiol-specific peroxidase that catalyzes the reduction of hydrogen peroxide and organic hydroperoxides to water and alcohols, respectively. Plays a role in cell protection against oxidative stress by detoxifying peroxides and as sensor of hydrogen peroxide-mediated signaling events. Might participate in the signaling cascades of growth factors and tumor necrosis factor-alpha by regulating the intracellular concentrations of H(2)O(2). Reduces an intramolecular disulfide bond in GDPD5 that gates the ability to GDPD5 to drive postmitotic motor neuron differentiation. This is Peroxiredoxin-1 (PRDX1) from Gekko japonicus (Schlegel's Japanese gecko).